We begin with the raw amino-acid sequence, 203 residues long: ATP-dependent Clp protease proteolytic subunit 2 (203 aa).

Ser-98 functions as the Nucleophile in the catalytic mechanism. The active site involves His-123.

Belongs to the peptidase S14 family. Fourteen ClpP subunits assemble into 2 heptameric rings which stack back to back to give a disk-like structure with a central cavity, resembling the structure of eukaryotic proteasomes.

The protein localises to the cytoplasm. The catalysed reaction is Hydrolysis of proteins to small peptides in the presence of ATP and magnesium. alpha-casein is the usual test substrate. In the absence of ATP, only oligopeptides shorter than five residues are hydrolyzed (such as succinyl-Leu-Tyr-|-NHMec, and Leu-Tyr-Leu-|-Tyr-Trp, in which cleavage of the -Tyr-|-Leu- and -Tyr-|-Trp bonds also occurs).. In terms of biological role, cleaves peptides in various proteins in a process that requires ATP hydrolysis. Has a chymotrypsin-like activity. Plays a major role in the degradation of misfolded proteins. This chain is ATP-dependent Clp protease proteolytic subunit 2, found in Chlamydia pneumoniae (Chlamydophila pneumoniae).